The sequence spans 344 residues: L-erythro-3,5-diaminohexanoate dehydrogenase (344 aa).

It belongs to the KDD family. Homodimer.

It carries out the reaction (3S,5S)-3,5-diaminohexanoate + NAD(+) + H2O = (5S)-5-amino-3-oxohexanoate + NH4(+) + NADH + H(+). It functions in the pathway amino-acid degradation; L-lysine degradation via acetate pathway. Its function is as follows. Involved in the anaerobic fermentation of lysine. Catalyzes the oxidative deamination of L-erythro-3,5-diaminohexanoate (3,5-DAH) to 3-keto-5-aminohexanoate (KAH). In Acetoanaerobium sticklandii (strain ATCC 12662 / DSM 519 / JCM 1433 / CCUG 9281 / NCIMB 10654 / HF) (Clostridium sticklandii), this protein is L-erythro-3,5-diaminohexanoate dehydrogenase.